The sequence spans 217 residues: NADPH-dependent 3-demethoxyubiquinone 3-hydroxylase, mitochondrial (217 aa).

Tandem repeats lie at residues 48–129 (AVDQ…TALL) and 130–217 (GKEG…SERF). Positions 48–217 (AVDQIIRVDH…SAAIYLSERF (170 aa)) are 2 X approximate tandem repeats. Residues Glu-60, Glu-90, His-93, Glu-142, Glu-178, and His-181 each contribute to the Fe cation site. Residues Tyr-212 and Arg-216 each coordinate NADH.

Belongs to the COQ7 family. In terms of assembly, component of a multi-subunit COQ enzyme complex. Interacts with COQ8B and COQ6. Interacts with COQ9. It depends on Fe cation as a cofactor.

It is found in the mitochondrion inner membrane. The catalysed reaction is a 5-methoxy-2-methyl-3-(all-trans-polyprenyl)benzoquinone + NADH + O2 = a 3-demethylubiquinone + NAD(+) + H2O. It functions in the pathway cofactor biosynthesis; ubiquinone biosynthesis. Its function is as follows. Catalyzes the hydroxylation of the 5-methoxy-2-methyl-3-(all-trans-polyprenyl)benzoquinone at the C6 position and participates in the biosynthesis of ubiquinone. Catalyzes the reaction through a substrate-mediated reduction pathway, whereby NADH shuttles electrons to 5-methoxy-2-methyl-3-(all-trans-decaprenyl)benzoquinone, which then transfers the electrons to the two Fe(3+) centers. The binding of 5-methoxy-2-methyl-3-(all-trans-polyprenyl)benzoquinone (DMQn) mediates reduction of the diiron center by nicotinamide adenine dinucleotide (NADH) and initiates oxygen activation for subsequent DMQ hydroxylation. The physiological substrates are 5-methoxy-2-methyl-3-(all-trans-nonaprenyl)benzoquinone (DMQ(9)) and 5-methoxy-2-methyl-3-(all-trans-decaprenyl)benzoquinone (DMQ(10)), however in vitro the enzyme does not have any specificity concerning the length of the polyprenyl tail, and accepts tails of various lengths with similar efficiency. Also has a structural role in the COQ enzyme complex, stabilizing other COQ polypeptides. Involved in lifespan determination in a ubiquinone-independent manner. Plays a role in modulating mitochondrial stress responses, acting in the nucleus, perhaps via regulating gene expression, independent of its characterized mitochondrial function in ubiquinone biosynthesis. This is NADPH-dependent 3-demethoxyubiquinone 3-hydroxylase, mitochondrial from Rattus norvegicus (Rat).